Reading from the N-terminus, the 693-residue chain is Guanyl-specific ribonuclease pgl-3 (693 aa).

An involved in dimerization region spans residues 205–447 (KKLMIEGPKI…VNRIIESLEK (243 aa)). Catalysis depends on His437, which acts as the Proton acceptor. Disordered regions lie at residues 445–468 (LEKS…GPTT), 523–591 (AEKN…DATP), and 620–693 (SSNG…RGGS). The segment covering 447–468 (KSSSSEPSATAKQTTTSNGPTT) has biased composition (low complexity). Polar residues-rich tracts occupy residues 528–548 (NTPS…SPTK) and 569–580 (ITKVSPQPQERT). The required for interaction with sepa-1 stretch occupies residues 581–614 (GTAWGSGDATPVPLATPVNEYKVSGFGAAPVASG). 3 stretches are compositionally biased toward gly residues: residues 625–634 (SGRGSYGGGR), 641–660 (RGAY…SRGY), and 668–693 (RGSY…RGGS). The interval 633-693 (GRGGDRGGRG…GFFGGSRGGS (61 aa)) is RNA-binding RGG-box.

As to quaternary structure, may form a homodimer. Interacts with pgl-1 and pgl-2; this association is not required for P-granule localization of either pgl-1 or pgl-2. Interacts with sepa-1; the interaction is enhanced in the presence of RNA. Interacts with prmt-1; the interaction is direct. In terms of processing, methylated at arginine residues in the RNA-binding RGG-box by prmt-1. Methylation promotes P-granule degradation by autophagy. Highly expressed in the germline. Expressed in most somatic cells.

It localises to the cytoplasmic granule. The enzyme catalyses [RNA] containing guanosine + H2O = an [RNA fragment]-3'-guanosine-3'-phosphate + a 5'-hydroxy-ribonucleotide-3'-[RNA fragment].. Its function is as follows. Guanyl-specific endoribonuclease which cleaves the phosphodiester bond in single-stranded RNA between the 3'-guanylic residue and the 5'-OH residue of adjacent nucleotide, resulting in the formation of a corresponding 2',3'-cyclic phosphate intermediate. P-granule component involved in germline development. Together with the P-granule component pgl-1, is involved in the formation of P-granules. Together with pgl-1, probably recruits other granule components such as pos-1, mex-3 and glh-1, and RNA to P-granules. In vitro, binds mRNA; this interaction is required for the formation of liquid-like droplets that resemble P-granules. Most likely recruits pgl-1 into P-granules during autophagy. Associates with adapters such as sepa-1 and is required for the accumulation and degradation of P-granules by autophagy in somatic cells. This ensures exclusive localization of the P-granules in germ cells. In addition, may act redundantly with pgl-1 to protect germ cells from excessive germline apoptosis during normal oogenesis and development of the two gonadal arms. This may in part be through regulating the localization of sir-2.1 which is involved in germ cell apoptosis. May protect somatic cells from excessive apoptosis during normal development. This Caenorhabditis elegans protein is Guanyl-specific ribonuclease pgl-3.